A 101-amino-acid chain; its full sequence is Small ribosomal subunit protein uS14 (101 aa).

The interval 51–70 is disordered; that stretch reads LPRDSSPSRQRNRCSQTGRP. The span at 52 to 68 shows a compositional bias: polar residues; the sequence is PRDSSPSRQRNRCSQTG.

Belongs to the universal ribosomal protein uS14 family. Part of the 30S ribosomal subunit. Contacts proteins S3 and S10.

Functionally, binds 16S rRNA, required for the assembly of 30S particles and may also be responsible for determining the conformation of the 16S rRNA at the A site. This chain is Small ribosomal subunit protein uS14, found in Mannheimia succiniciproducens (strain KCTC 0769BP / MBEL55E).